A 199-amino-acid polypeptide reads, in one-letter code: uncharacterized protein (199 aa).

This is an uncharacterized protein from Rhodococcus erythropolis (Arthrobacter picolinophilus).